A 203-amino-acid polypeptide reads, in one-letter code: MRLWLIRHGETQANIDGLYSGHAPTPLTARGIEQAQNLHTLLHGVSFDLVLCSELERAQHTARLVLSDRQLPVQIIPELNEMFFGDWEMRHHRDLMQEDAENYSAWCNDWQHAIPTNGEGFQAFSQRVERFIARLSEFQHYQNILVVSHQGVLSLLIARLIGMPAEAMWHFRVDQGCWSAIDINQKFATLRVLNSRAIGVENA.

The active-site Tele-phosphohistidine intermediate is the His-8. Residue Glu-81 is the Proton donor/acceptor of the active site.

Belongs to the phosphoglycerate mutase family.

The catalysed reaction is adenosylcob(III)alamin 5'-phosphate + H2O = adenosylcob(III)alamin + phosphate. The enzyme catalyses alpha-ribazole 5'-phosphate + H2O = alpha-ribazole + phosphate. Its pathway is nucleoside biosynthesis; alpha-ribazole biosynthesis; alpha-ribazole from 5,6-dimethylbenzimidazole: step 2/2. Functionally, catalyzes the conversion of adenosylcobalamin 5'-phosphate to adenosylcobalamin (vitamin B12); involved in the assembly of the nucleotide loop of cobalamin. Also catalyzes the hydrolysis of the phospho group from alpha-ribazole 5'-phosphate to form alpha-ribazole. The chain is Adenosylcobalamin/alpha-ribazole phosphatase (cobC) from Escherichia coli (strain K12).